A 433-amino-acid chain; its full sequence is 26S proteasome regulatory subunit 7 (433 aa).

The segment at 1–22 (MPDYLGADQRKTKEDEKDDKPI) is disordered. Residues 8–22 (DQRKTKEDEKDDKPI) are compositionally biased toward basic and acidic residues. An N6-acetyllysine modification is found at lysine 116. 216–223 (GPPGTGKT) serves as a coordination point for ATP. The residue at position 422 (lysine 422) is an N6-acetyllysine.

This sequence belongs to the AAA ATPase family. Component of the 19S proteasome regulatory particle complex. The 26S proteasome consists of a 20S core particle (CP) and two 19S regulatory subunits (RP). The regulatory particle is made of a lid composed of 9 subunits, a base containing 6 ATPases including PSMC2 and few additional components. Interacts with NDC80/HEC; this interaction is detected only during M phase. Interacts and SQSTM1. Interacts with PAAF1. Directly interacts with TRIM5. Post-translationally, monoubiquitinated by RNF181. In terms of processing, phosphorylated. Dephosphorylated by UBLCP1 which impairs PSMC2 ATPase activity and disrupts 26S proteasome assembly.

The protein resides in the cytoplasm. The protein localises to the nucleus. In terms of biological role, component of the 26S proteasome, a multiprotein complex involved in the ATP-dependent degradation of ubiquitinated proteins. This complex plays a key role in the maintenance of protein homeostasis by removing misfolded or damaged proteins, which could impair cellular functions, and by removing proteins whose functions are no longer required. Therefore, the proteasome participates in numerous cellular processes, including cell cycle progression, apoptosis, or DNA damage repair. PSMC2 belongs to the heterohexameric ring of AAA (ATPases associated with diverse cellular activities) proteins that unfolds ubiquitinated target proteins that are concurrently translocated into a proteolytic chamber and degraded into peptides. The protein is 26S proteasome regulatory subunit 7 (PSMC2) of Bos taurus (Bovine).